Consider the following 206-residue polypeptide: RNA pyrophosphohydrolase (206 aa).

The 145-residue stretch at 6-150 (GYRPNVGIVI…KRDVYRKVMK (145 aa)) folds into the Nudix hydrolase domain. Residues 38 to 59 (GGINEGENIETAMYRELYEEVG) carry the Nudix box motif. The span at 162 to 191 (KPETVEKPRVERTEKRDFQKRDNQKREFRK) shows a compositional bias: basic and acidic residues. The tract at residues 162 to 206 (KPETVEKPRVERTEKRDFQKRDNQKREFRKSARTWNNSHQKGKAQ) is disordered.

It belongs to the Nudix hydrolase family. RppH subfamily. It depends on a divalent metal cation as a cofactor.

In terms of biological role, accelerates the degradation of transcripts by removing pyrophosphate from the 5'-end of triphosphorylated RNA, leading to a more labile monophosphorylated state that can stimulate subsequent ribonuclease cleavage. The polypeptide is RNA pyrophosphohydrolase (Actinobacillus pleuropneumoniae serotype 3 (strain JL03)).